A 155-amino-acid chain; its full sequence is Histone H2B.5 (155 aa).

Basic and acidic residues-rich tracts occupy residues 1–28 (MAPK…EKAP) and 36–54 (EKRL…GKKD). Residues 1–63 (MAPKAEKKPA…DRAGRKKAKK (63 aa)) form a disordered region. Residues Lys7 and Lys37 each carry the N6-acetyllysine modification. Lys151 participates in a covalent cross-link: Glycyl lysine isopeptide (Lys-Gly) (interchain with G-Cter in ubiquitin).

The protein belongs to the histone H2B family. In terms of assembly, the nucleosome is a histone octamer containing two molecules each of H2A, H2B, H3 and H4 assembled in one H3-H4 heterotetramer and two H2A-H2B heterodimers. The octamer wraps approximately 147 bp of DNA. In terms of processing, can be acetylated to form H2BK6ac and H2BK33ac. Monoubiquitinated by BRE1 to form H2BK143ub1 and deubiquitinated by UBP26. Required for heterochromatic histone H3 di- and trimethylation at H3K4me. May give a specific tag for epigenetic transcriptional activation.

It is found in the nucleus. The protein resides in the chromosome. Its function is as follows. Core component of nucleosome. Nucleosomes wrap and compact DNA into chromatin, limiting DNA accessibility to the cellular machineries which require DNA as a template. Histones thereby play a central role in transcription regulation, DNA repair, DNA replication and chromosomal stability. DNA accessibility is regulated via a complex set of post-translational modifications of histones, also called histone code, and nucleosome remodeling. The polypeptide is Histone H2B.5 (H2B.5) (Oryza sativa subsp. japonica (Rice)).